A 469-amino-acid polypeptide reads, in one-letter code: tRNA modification GTPase MnmE (469 aa).

(6S)-5-formyl-5,6,7,8-tetrahydrofolate contacts are provided by R26, E88, and R127. The TrmE-type G domain occupies 222-390 (GLKVAIVGRP…LEDAILHLVQ (169 aa)). Residue N232 participates in K(+) binding. GTP contacts are provided by residues 232-237 (NVGKSS), 251-257 (TDLPGTT), 276-279 (DTAG), and 344-347 (NKAD). S236 contributes to the Mg(2+) binding site. K(+)-binding residues include T251, L253, and T256. Position 257 (T257) interacts with Mg(2+). K469 is a (6S)-5-formyl-5,6,7,8-tetrahydrofolate binding site.

This sequence belongs to the TRAFAC class TrmE-Era-EngA-EngB-Septin-like GTPase superfamily. TrmE GTPase family. In terms of assembly, homodimer. Heterotetramer of two MnmE and two MnmG subunits. K(+) is required as a cofactor.

It localises to the cytoplasm. Functionally, exhibits a very high intrinsic GTPase hydrolysis rate. Involved in the addition of a carboxymethylaminomethyl (cmnm) group at the wobble position (U34) of certain tRNAs, forming tRNA-cmnm(5)s(2)U34. The chain is tRNA modification GTPase MnmE from Synechococcus elongatus.